The primary structure comprises 333 residues: Fructose-1,6-bisphosphatase class 1 (333 aa).

Residues E92, D114, L116, and D117 each contribute to the Mg(2+) site. Residues 117 to 120 and N209 each bind substrate; that span reads DGSS. Residue E279 participates in Mg(2+) binding.

It belongs to the FBPase class 1 family. In terms of assembly, homotetramer. Requires Mg(2+) as cofactor.

Its subcellular location is the cytoplasm. It carries out the reaction beta-D-fructose 1,6-bisphosphate + H2O = beta-D-fructose 6-phosphate + phosphate. It functions in the pathway carbohydrate biosynthesis; gluconeogenesis. The protein is Fructose-1,6-bisphosphatase class 1 of Alkalilimnicola ehrlichii (strain ATCC BAA-1101 / DSM 17681 / MLHE-1).